Consider the following 460-residue polypeptide: Indoleacetamide hydrolase (460 aa).

Active-site charge relay system residues include Lys-71 and Ser-146. The active-site Acyl-ester intermediate is Ser-169.

The protein belongs to the amidase family.

Its pathway is plant hormone metabolism; auxin biosynthesis. Hydrolyzes indole-3-acetamide (IAM) into indole-3-acetic acid (IAA). This Pantoea agglomerans pv. gypsophilae (Erwinia herbicola) protein is Indoleacetamide hydrolase (iaaH).